Consider the following 357-residue polypeptide: MKHFTTLIVVFVAIKAYLVALALVVPRQYDTSSTLLFPNNRFLSRLVIWDSVFFVSSAERSHLYEHEWAFSWMWSRALGLAGSRDAIAYTAIAVSSLSHLLAALMLRKLTESVFHNKRFAETTALMYILSPAGIFLVAGYTESLFALLSFTGLYLRQRGQYPLAGAVLGASCLLRGNGLLWGIPFLFDLASAIKHNQFNRGVSVVIGGSLVGAVFLYTQYLPWSIFCPERDEWCNYYIPSIYGYVQQRYWNVGFLRYWTANNIPNFLFAAPVLYLMYQSMSTNPSLVPFYTVHAIMGLACVFMWHVQIITRISTCLPTLYWYMAKLAQGYNGHYVVRYIFVWITFQVVMWGAYLPPA.

The next 8 membrane-spanning stretches (helical) occupy residues 6–26 (TLIV…LVVP), 86–106 (AIAY…ALML), 128–148 (ILSP…FALL), 167–187 (VLGA…PFLF), 201–221 (GVSV…TQYL), 257–277 (YWTA…YLMY), 286–306 (LVPF…MWHV), and 334–354 (YVVR…GAYL).

This sequence belongs to the PIGV family.

It is found in the endoplasmic reticulum membrane. It functions in the pathway glycolipid biosynthesis; glycosylphosphatidylinositol-anchor biosynthesis. Its function is as follows. Mannosyltransferase involved in glycosylphosphatidylinositol-anchor biosynthesis. Transfers the second mannose to the glycosylphosphatidylinositol during GPI precursor assembly. The chain is GPI mannosyltransferase 2 (GPI18) from Yarrowia lipolytica (strain CLIB 122 / E 150) (Yeast).